We begin with the raw amino-acid sequence, 28 residues long: Putative antitoxin AF_1079 (28 aa).

Belongs to the UPF0165 family.

Functionally, possibly the antitoxin component of a type II toxin-antitoxin (TA) system. The polypeptide is Putative antitoxin AF_1079 (Archaeoglobus fulgidus (strain ATCC 49558 / DSM 4304 / JCM 9628 / NBRC 100126 / VC-16)).